Consider the following 54-residue polypeptide: Conotoxin vc5c (54 aa).

The N-terminal stretch at 1–14 is a signal peptide; that stretch reads VILLLLIASIPSDA. The propeptide occupies 15 to 43; it reads VQLKTKDDMPLASFHGNARRTLQMLSNKR. 4-carboxyglutamate is present on Glu50. Trp51 carries the 6'-bromotryptophan modification.

Belongs to the conotoxin T superfamily. In terms of processing, contains 2 disulfide bonds that can be either 'C1-C3, C2-C4' or 'C1-C4, C2-C3', since these disulfide connectivities have been observed for conotoxins with cysteine framework V (for examples, see AC P0DQQ7 and AC P81755). As to expression, expressed by the venom duct.

The protein localises to the secreted. This is Conotoxin vc5c from Conus victoriae (Queen Victoria cone).